Consider the following 634-residue polypeptide: MINIRFPDGSIREFEAGVNSLDVAKSISPSLAKATMAAYIDDQLKDAKDAINSNCELRLITVKDPEGLEILRHSCAHLLAHAVKELYPNTEVTIGPVVDNGFYYDFSFKESIGEADLPTIEKKMKELAKKSAPVSYRVVPKAEAIEFFKAQGENYKVEIIDSIADEQMKIYTQDNFSDLCRGPHIPNTSVLKAFKLTKLAGAYWRGNSDNEMLTRIYGTCWATKEDLEQYLNMLEEAEKRDHRKIGKVLDLFHFQEDSPGIAFWHDNGVRIWRQVEDYMRASNNKYGCSEIRTPLIADFSLWQKSGHASKYAENMFATKSENRDFAIRPMNCPTCVQVYNTKLHSYRDLPIRMAEFGIVHRNEPSGSLHGLLRVRSFTQDDGHIFCTPEQVEEEVILMVQQCFEVYKDFGFNDFAVKIALRPENRIGDDETWDKSEQILKNALDANNVSYELFPGEGAFYGPKIEFHLKDAIGRSWQCGTIQLDFSMPQRLGATYIDKNGEKQVSVMLHRAIVGSLERFIGMLIEHYAGNLPLWLAPVQVAVMGISNNQDDYCKEVFIMLEKNGIRAKLDLRNEKIGFKIREHTLLRVPYLVILGKNEQEQKIITIRKHSGEDLGQMSVDDFCAFLDKQIQAKE.

The TGS domain occupies 1 to 61 (MINIRFPDGS…NSNCELRLIT (61 aa)). The interval 241–532 (DHRKIGKVLD…LIEHYAGNLP (292 aa)) is catalytic. Positions 332, 383, and 509 each coordinate Zn(2+).

Belongs to the class-II aminoacyl-tRNA synthetase family. In terms of assembly, homodimer. The cofactor is Zn(2+).

Its subcellular location is the cytoplasm. It carries out the reaction tRNA(Thr) + L-threonine + ATP = L-threonyl-tRNA(Thr) + AMP + diphosphate + H(+). Catalyzes the attachment of threonine to tRNA(Thr) in a two-step reaction: L-threonine is first activated by ATP to form Thr-AMP and then transferred to the acceptor end of tRNA(Thr). Also edits incorrectly charged L-seryl-tRNA(Thr). The polypeptide is Threonine--tRNA ligase (Francisella tularensis subsp. holarctica (strain FTNF002-00 / FTA)).